A 309-amino-acid polypeptide reads, in one-letter code: Carbamate kinase 3 (309 aa).

Belongs to the carbamate kinase family.

The protein resides in the cytoplasm. The enzyme catalyses hydrogencarbonate + NH4(+) + ATP = carbamoyl phosphate + ADP + H2O + H(+). The protein operates within metabolic intermediate metabolism; carbamoyl phosphate degradation; CO(2) and NH(3) from carbamoyl phosphate: step 1/1. This chain is Carbamate kinase 3 (arcC3), found in Staphylococcus aureus (strain USA300).